The following is a 387-amino-acid chain: 1,3-propanediol dehydrogenase (387 aa).

It belongs to the iron-containing alcohol dehydrogenase family. Homooctamer. It depends on Fe cation as a cofactor.

It catalyses the reaction propane-1,3-diol + NAD(+) = 3-hydroxypropanal + NADH + H(+). This chain is 1,3-propanediol dehydrogenase (dhaT), found in Klebsiella pneumoniae.